Consider the following 233-residue polypeptide: Type IV secretion system protein PtlE homolog (233 aa).

The chain crosses the membrane as a helical span at residues 42–62; it reads VAWAALAVTALSLIAIATMLP.

Belongs to the virB8 family.

It localises to the cell inner membrane. The polypeptide is Type IV secretion system protein PtlE homolog (ptlE) (Bordetella bronchiseptica (strain ATCC BAA-588 / NCTC 13252 / RB50) (Alcaligenes bronchisepticus)).